Here is a 241-residue protein sequence, read N- to C-terminus: Small ribosomal subunit protein uS5 (241 aa).

The interval 1–53 (MSDNEKETQVAEETQNTQAAAESNNEDRKSRRGQRGEGRRGERRNRREESHEN) is disordered. Residues 11–22 (AEETQNTQAAAE) show a composition bias toward low complexity. Basic and acidic residues predominate over residues 25 to 53 (NEDRKSRRGQRGEGRRGERRNRREESHEN). Residues 55–118 (MLDRVVTINR…LDAKKHMFTV (64 aa)) enclose the S5 DRBM domain.

This sequence belongs to the universal ribosomal protein uS5 family. As to quaternary structure, part of the 30S ribosomal subunit. Contacts proteins S4 and S8.

With S4 and S12 plays an important role in translational accuracy. Functionally, located at the back of the 30S subunit body where it stabilizes the conformation of the head with respect to the body. This chain is Small ribosomal subunit protein uS5, found in Bifidobacterium adolescentis (strain ATCC 15703 / DSM 20083 / NCTC 11814 / E194a).